Reading from the N-terminus, the 305-residue chain is Autophagy-related protein 14 (305 aa).

A coiled-coil region spans residues 34-147 (KMNLLILRQE…LDTLSHILAR (114 aa)).

It belongs to the ATG14 family. Component of the autophagy-specific VPS34 PI3-kinase complex I.

The protein localises to the preautophagosomal structure membrane. Its subcellular location is the vacuole membrane. Functionally, required for cytoplasm to vacuole transport (Cvt) and autophagy as a part of the autophagy-specific VPS34 PI3-kinase complex I. This complex is essential to recruit the ATG8-phosphatidylinositol conjugate and the ATG12-ATG5 conjugate to the pre-autophagosomal structure. ATG14 mediates the specific binding of the VPS34 PI3-kinase complex I to the preautophagosomal structure (PAS). The protein is Autophagy-related protein 14 of Kluyveromyces marxianus (strain DMKU3-1042 / BCC 29191 / NBRC 104275) (Yeast).